A 382-amino-acid chain; its full sequence is Pectinesterase (382 aa).

An N-terminal signal peptide occupies residues 1-16; it reads MKIIVLLLLAVVLASA. Residues Cys153 and Cys164 are joined by a disulfide bond. The N-linked (GlcNAc...) asparagine glycan is linked to Asn179. Gln193 contributes to the substrate binding site. Asp216 acts as the Proton donor in catalysis. Asp242 (nucleophile) is an active-site residue. Substrate is bound by residues Arg306 and Trp308. N-linked (GlcNAc...) asparagine glycans are attached at residues Asn340 and Asn376.

This sequence belongs to the pectinesterase family. Expressed throughout the midgut with particularly strong expression in the ventriculus.

The protein localises to the secreted. It catalyses the reaction [(1-&gt;4)-alpha-D-galacturonosyl methyl ester](n) + n H2O = [(1-&gt;4)-alpha-D-galacturonosyl](n) + n methanol + n H(+). It functions in the pathway glycan metabolism; pectin degradation; 2-dehydro-3-deoxy-D-gluconate from pectin: step 1/5. Pectinesterase which probably plays an important role in the digestion of plant cell walls. The polypeptide is Pectinesterase (Sitophilus oryzae (Rice weevil)).